Consider the following 428-residue polypeptide: CRS2-associated factor 1, mitochondrial (428 aa).

The transit peptide at 1-21 (MLLLAGLLRRARPPRRPSVRR) directs the protein to the mitochondrion. Disordered stretches follow at residues 33-100 (PPAS…REPK) and 129-152 (HADD…RERV). 2 consecutive CRM domains span residues 155–253 (EPLT…KRPV) and 275–371 (EGLT…IQDN). The segment at 378–428 (SVLEEESAGAESENGDQEQASSDWASDECSQLSSSDEMPDDKSAISEADSD) is disordered. Residues 380–393 (LEEESAGAESENGD) show a composition bias toward acidic residues. Polar residues predominate over residues 394–413 (QEQASSDWASDECSQLSSSD).

Part of large ribonucleo-protein complexes that include group IIB introns.

Its subcellular location is the mitochondrion. Its function is as follows. May be involved in the splicing of group IIB introns in mitochondria. The protein is CRS2-associated factor 1, mitochondrial of Oryza sativa subsp. japonica (Rice).